A 323-amino-acid polypeptide reads, in one-letter code: Isoeugenol synthase 1 (323 aa).

NADP(+) is bound by residues 14-17 (TGYL), 36-47 (VMPLKKNSDDSK), 88-90 (VPQ), 113-115 (SEF), Lys135, and 155-157 (NSL). Lys135 (proton donor/acceptor) is an active-site residue.

Belongs to the NmrA-type oxidoreductase family. Expressed in flowers, especially in corolla and tubes of petals, probably in both epidermal and mesophyll cell layers.

The catalysed reaction is (E)-isoeugenol + acetate + NADP(+) = (E)-coniferyl acetate + NADPH. It functions in the pathway aromatic compound metabolism; phenylpropanoid biosynthesis. With respect to regulation, inhibited by zinc and copper ions. Repressed by 4-bromo-cinnamyl acetate. Involved in the biosynthesis of the floral volatile isoeugenol. Catalyzes the synthesis of the phenylpropene isoeugenol from coniferyl acetate. Phenylpropenes are the primary constituents of various essential plant oils. They are produced as antimicrobial and antianimal compounds, or as floral attractants of pollinators. Isoeugenol is a characteristic aromatic constituent of spices and a floral volatile compound. The chain is Isoeugenol synthase 1 from Petunia hybrida (Petunia).